A 277-amino-acid chain; its full sequence is Large ribosomal subunit protein uL2 (277 aa).

A disordered region spans residues 223–277; it reads VTMNPVDHPHGGGEGRTSGGRHPVTPWGKPTKGMKTRSNKATDKFIVTSRHKRKK.

The protein belongs to the universal ribosomal protein uL2 family. Part of the 50S ribosomal subunit. Forms a bridge to the 30S subunit in the 70S ribosome.

Its function is as follows. One of the primary rRNA binding proteins. Required for association of the 30S and 50S subunits to form the 70S ribosome, for tRNA binding and peptide bond formation. It has been suggested to have peptidyltransferase activity; this is somewhat controversial. Makes several contacts with the 16S rRNA in the 70S ribosome. This is Large ribosomal subunit protein uL2 from Azorhizobium caulinodans (strain ATCC 43989 / DSM 5975 / JCM 20966 / LMG 6465 / NBRC 14845 / NCIMB 13405 / ORS 571).